Consider the following 122-residue polypeptide: NADPH-dependent 7-cyano-7-deazaguanine reductase (122 aa).

Residue Cys34 is the Thioimide intermediate of the active site. The active-site Proton donor is Asp41. Substrate is bound by residues 56–58 (VEL) and 75–76 (HE).

The protein belongs to the GTP cyclohydrolase I family. QueF type 1 subfamily.

The protein localises to the cytoplasm. It carries out the reaction 7-aminomethyl-7-carbaguanine + 2 NADP(+) = 7-cyano-7-deazaguanine + 2 NADPH + 3 H(+). Its pathway is tRNA modification; tRNA-queuosine biosynthesis. Functionally, catalyzes the NADPH-dependent reduction of 7-cyano-7-deazaguanine (preQ0) to 7-aminomethyl-7-deazaguanine (preQ1). The sequence is that of NADPH-dependent 7-cyano-7-deazaguanine reductase from Anaeromyxobacter sp. (strain Fw109-5).